The chain runs to 251 residues: Probable-ribose 5-phosphate isomerase (251 aa).

The protein belongs to the ribose 5-phosphate isomerase family.

It carries out the reaction aldehydo-D-ribose 5-phosphate = D-ribulose 5-phosphate. It functions in the pathway carbohydrate degradation; pentose phosphate pathway; D-ribose 5-phosphate from D-ribulose 5-phosphate (non-oxidative stage): step 1/1. This chain is Probable-ribose 5-phosphate isomerase (rpia-1), found in Caenorhabditis elegans.